The chain runs to 126 residues: Large ribosomal subunit protein bL17 (126 aa).

This sequence belongs to the bacterial ribosomal protein bL17 family. As to quaternary structure, part of the 50S ribosomal subunit. Contacts protein L32.

The protein is Large ribosomal subunit protein bL17 of Limosilactobacillus fermentum (strain NBRC 3956 / LMG 18251) (Lactobacillus fermentum).